The chain runs to 356 residues: GTPase Obg (356 aa).

In terms of domain architecture, Obg spans 1 to 158 (MFIDSVKITL…RLVRLELKLI (158 aa)). The OBG-type G domain maps to 159 to 339 (ADVGLVGFPN…LKFMLLEEIK (181 aa)). GTP contacts are provided by residues 165-172 (GFPNVGKS), 190-194 (FTTLT), 212-215 (DIPG), 280-283 (SKSD), and 320-322 (SSL). Residues Ser-172 and Thr-192 each coordinate Mg(2+).

It belongs to the TRAFAC class OBG-HflX-like GTPase superfamily. OBG GTPase family. Monomer. Requires Mg(2+) as cofactor.

The protein resides in the cytoplasm. An essential GTPase which binds GTP, GDP and possibly (p)ppGpp with moderate affinity, with high nucleotide exchange rates and a fairly low GTP hydrolysis rate. Plays a role in control of the cell cycle, stress response, ribosome biogenesis and in those bacteria that undergo differentiation, in morphogenesis control. The sequence is that of GTPase Obg from Campylobacter jejuni subsp. jejuni serotype O:23/36 (strain 81-176).